A 293-amino-acid polypeptide reads, in one-letter code: Elongation factor Ts (293 aa).

The tract at residues 80–83 (TDFV) is involved in Mg(2+) ion dislocation from EF-Tu.

Belongs to the EF-Ts family.

It localises to the cytoplasm. Functionally, associates with the EF-Tu.GDP complex and induces the exchange of GDP to GTP. It remains bound to the aminoacyl-tRNA.EF-Tu.GTP complex up to the GTP hydrolysis stage on the ribosome. The protein is Elongation factor Ts of Paraburkholderia phymatum (strain DSM 17167 / CIP 108236 / LMG 21445 / STM815) (Burkholderia phymatum).